Consider the following 206-residue polypeptide: Small ribosomal subunit protein uS4 (206 aa).

The region spanning 96–156 (SRLDNIVYRL…KKSKNQLRIK (61 aa)) is the S4 RNA-binding domain.

It belongs to the universal ribosomal protein uS4 family. In terms of assembly, part of the 30S ribosomal subunit. Contacts protein S5. The interaction surface between S4 and S5 is involved in control of translational fidelity.

Functionally, one of the primary rRNA binding proteins, it binds directly to 16S rRNA where it nucleates assembly of the body of the 30S subunit. With S5 and S12 plays an important role in translational accuracy. The protein is Small ribosomal subunit protein uS4 of Buchnera aphidicola subsp. Cinara cedri (strain Cc).